The sequence spans 161 residues: Nucleotide-binding protein Shew185_3601 (161 aa).

The protein belongs to the YajQ family.

Nucleotide-binding protein. The sequence is that of Nucleotide-binding protein Shew185_3601 from Shewanella baltica (strain OS185).